The following is a 215-amino-acid chain: Cytochrome b6 (215 aa).

Residues 32 to 52 (IFYCIGGIVFTSFLIQVASGF) traverse the membrane as a helical segment. Cys-35 provides a ligand contact to heme c. His-86 and His-100 together coordinate heme b. The next 3 membrane-spanning stretches (helical) occupy residues 90–110 (ASMM…TGGF), 116–136 (LTWV…VTGY), and 186–206 (LHTF…FLMI). Residues His-187 and His-202 each contribute to the heme b site.

It belongs to the cytochrome b family. PetB subfamily. The 4 large subunits of the cytochrome b6-f complex are cytochrome b6, subunit IV (17 kDa polypeptide, PetD), cytochrome f and the Rieske protein, while the 4 small subunits are PetG, PetL, PetM and PetN. The complex functions as a dimer. Heme b is required as a cofactor. Heme c serves as cofactor.

It localises to the plastid. It is found in the chloroplast thylakoid membrane. Functionally, component of the cytochrome b6-f complex, which mediates electron transfer between photosystem II (PSII) and photosystem I (PSI), cyclic electron flow around PSI, and state transitions. The polypeptide is Cytochrome b6 (Gracilaria tenuistipitata var. liui (Red alga)).